A 169-amino-acid polypeptide reads, in one-letter code: MTALNVLIYPDDHLKVVCEPVTKVNDAIRKIVDDMFDTMYQEKGIGLAAPQVDILQRIITIDVEGDKQNQFVLINPEILASEGETGIEEGCLSIPGFRALVPRKEKVTVRALDRDGKEFTLDADGLLAICIQHEIDHLNGILFVDYLSPLKRQRIKEKLIKYKKQIAKS.

The Fe cation site is built by C91 and H133. The active site involves E134. H137 provides a ligand contact to Fe cation.

The protein belongs to the polypeptide deformylase family. It depends on Fe(2+) as a cofactor.

It carries out the reaction N-terminal N-formyl-L-methionyl-[peptide] + H2O = N-terminal L-methionyl-[peptide] + formate. Removes the formyl group from the N-terminal Met of newly synthesized proteins. Requires at least a dipeptide for an efficient rate of reaction. N-terminal L-methionine is a prerequisite for activity but the enzyme has broad specificity at other positions. The chain is Peptide deformylase from Haemophilus influenzae (strain ATCC 51907 / DSM 11121 / KW20 / Rd).